The chain runs to 258 residues: Regulatory protein RecX (258 aa).

Belongs to the RecX family.

It is found in the cytoplasm. Its function is as follows. Modulates RecA activity. In Streptococcus pneumoniae (strain 70585), this protein is Regulatory protein RecX.